Consider the following 493-residue polypeptide: Cytoplasmic tRNA 2-thiolation protein 2 (493 aa).

Phosphoserine is present on serine 489.

It belongs to the CTU2/NCS2 family. Interacts with NCS6 and URM1. May act by forming a heterodimer with NCS6.

The protein resides in the cytoplasm. It participates in tRNA modification; 5-methoxycarbonylmethyl-2-thiouridine-tRNA biosynthesis. Plays a central role in 2-thiolation of mcm(5)S(2)U at tRNA wobble positions of tRNA(Lys), tRNA(Glu) and tRNA(Gln). May act by forming a heterodimer with NCS6 that ligates sulfur from thiocarboxylated URM1 onto the uridine of tRNAs at wobble position. Prior mcm(5) tRNA modification by the elongator complex is required for 2-thiolation. May also be involved in protein urmylation. This is Cytoplasmic tRNA 2-thiolation protein 2 from Saccharomyces cerevisiae (strain YJM789) (Baker's yeast).